The chain runs to 24 residues: GFRDVLKGAAKQFVKTVAGHIANI.

Expressed by the skin glands.

Its subcellular location is the secreted. In terms of biological role, antimicrobial peptide that shows higher potency against Gram-negative bacteria than against Gram-positive bacteria. Has a very week hemolytic activity. This is Ascaphin-2 from Ascaphus truei (Coastal tailed frog).